The sequence spans 783 residues: Protein involved in starch initiation 1 (783 aa).

A chloroplast-targeting transit peptide spans 1–27 (MGFSQAIRLNLASFSSPSPCDYCLTRV). 3 coiled-coil regions span residues 128–309 (LHDA…LKEE), 345–432 (LVFS…LELA), and 457–512 (LQEK…LKAL).

In terms of assembly, interacts with PTST2; the interaction is essential for the initiation of starch granules biosynthesis in leaf chloroplasts. Interacts with SS4; the interaction is essential for the initiation of starch granules biosynthesis in leaf chloroplasts.

The protein resides in the plastid. It localises to the chloroplast. Its function is as follows. Required for the initiation of starch granules biosynthesis in leaf chloroplasts. Involved in determining starch granule number and size in chloroplasts. This Arabidopsis thaliana (Mouse-ear cress) protein is Protein involved in starch initiation 1.